We begin with the raw amino-acid sequence, 205 residues long: Small ribosomal subunit protein uS4 (205 aa).

Positions 1–16 are enriched in basic and acidic residues; that stretch reads MSKRESSKYKIDRRMG. Residues 1-46 are disordered; it reads MSKRESSKYKIDRRMGENIWGRPKSPVNRREYGPGQHGQRRKSKLS. Residues 94–157 form the S4 RNA-binding domain; sequence SRLDAIVYRA…KQLVSVLESV (64 aa).

Belongs to the universal ribosomal protein uS4 family. In terms of assembly, part of the 30S ribosomal subunit. Contacts protein S5. The interaction surface between S4 and S5 is involved in control of translational fidelity.

Functionally, one of the primary rRNA binding proteins, it binds directly to 16S rRNA where it nucleates assembly of the body of the 30S subunit. With S5 and S12 plays an important role in translational accuracy. The polypeptide is Small ribosomal subunit protein uS4 (Sinorhizobium fredii (strain NBRC 101917 / NGR234)).